The primary structure comprises 106 residues: Ribulose bisphosphate carboxylase small subunit (106 aa).

The protein belongs to the RuBisCO small chain family. In terms of assembly, heterohexadecamer of 8 large and 8 small subunits.

The protein localises to the plastid. The protein resides in the cyanelle. Functionally, ruBisCO catalyzes two reactions: the carboxylation of D-ribulose 1,5-bisphosphate, the primary event in carbon dioxide fixation, as well as the oxidative fragmentation of the pentose substrate. Both reactions occur simultaneously and in competition at the same active site. Although the small subunit is not catalytic it is essential for maximal activity. The sequence is that of Ribulose bisphosphate carboxylase small subunit from Cyanophora paradoxa.